Reading from the N-terminus, the 630-residue chain is Pentatricopeptide repeat-containing protein At1g62670, mitochondrial (630 aa).

A mitochondrion-targeting transit peptide spans 1–22; that stretch reads MRISFAIASTAKRFVHRSLVVR. PPR repeat units lie at residues 44–79, 80–114, 115–149, 150–184, 185–219, 220–254, 255–289, 290–324, 325–359, 360–394, 395–429, 430–464, 465–499, 500–534, 535–569, and 570–604; these read TSYD…RPFP, SIIE…GIPH, NHYT…GYEP, NIVT…GYQP, NTVT…GCQP, DLVT…KLEP, GVLI…GIRP, NVVT…KINP, DVFT…SIDP, SIVT…HCFP, DVVT…GLVG, NTVT…GVPP, NIMT…KMEP, TIYT…GVKP, DVVA…GTLP, and NSGC…GFAG.

This sequence belongs to the PPR family. P subfamily.

The protein resides in the mitochondrion. The polypeptide is Pentatricopeptide repeat-containing protein At1g62670, mitochondrial (Arabidopsis thaliana (Mouse-ear cress)).